The sequence spans 364 residues: tRNA/tmRNA (uracil-C(5))-methyltransferase (364 aa).

S-adenosyl-L-methionine is bound by residues Q189, Y216, N221, E237, and D297. C322 (nucleophile) is an active-site residue. E356 serves as the catalytic Proton acceptor.

This sequence belongs to the class I-like SAM-binding methyltransferase superfamily. RNA M5U methyltransferase family. TrmA subfamily.

The catalysed reaction is uridine(54) in tRNA + S-adenosyl-L-methionine = 5-methyluridine(54) in tRNA + S-adenosyl-L-homocysteine + H(+). It catalyses the reaction uridine(341) in tmRNA + S-adenosyl-L-methionine = 5-methyluridine(341) in tmRNA + S-adenosyl-L-homocysteine + H(+). Dual-specificity methyltransferase that catalyzes the formation of 5-methyluridine at position 54 (m5U54) in all tRNAs, and that of position 341 (m5U341) in tmRNA (transfer-mRNA). This is tRNA/tmRNA (uracil-C(5))-methyltransferase from Campylobacter curvus (strain 525.92).